A 348-amino-acid polypeptide reads, in one-letter code: Phospho-2-dehydro-3-deoxyheptonate aldolase, Trp-sensitive (348 aa).

It belongs to the class-I DAHP synthase family.

The enzyme catalyses D-erythrose 4-phosphate + phosphoenolpyruvate + H2O = 7-phospho-2-dehydro-3-deoxy-D-arabino-heptonate + phosphate. It functions in the pathway metabolic intermediate biosynthesis; chorismate biosynthesis; chorismate from D-erythrose 4-phosphate and phosphoenolpyruvate: step 1/7. Functionally, stereospecific condensation of phosphoenolpyruvate (PEP) and D-erythrose-4-phosphate (E4P) giving rise to 3-deoxy-D-arabino-heptulosonate-7-phosphate (DAHP). The sequence is that of Phospho-2-dehydro-3-deoxyheptonate aldolase, Trp-sensitive (aroH) from Escherichia coli (strain K12).